We begin with the raw amino-acid sequence, 149 residues long: Urease accessory protein UreE (149 aa).

Belongs to the UreE family.

It localises to the cytoplasm. Involved in urease metallocenter assembly. Binds nickel. Probably functions as a nickel donor during metallocenter assembly. The chain is Urease accessory protein UreE from Prochlorococcus marinus (strain AS9601).